The sequence spans 219 residues: Counting factor-associated protein C (219 aa).

Residues 1-16 (MKVLILLVSLISVCFS) form the signal peptide. N-linked (GlcNAc...) asparagine glycans are attached at residues N74 and N123.

Its subcellular location is the secreted. The protein is Counting factor-associated protein C (cfaC) of Dictyostelium discoideum (Social amoeba).